Consider the following 68-residue polypeptide: MPKHEFSVDMTCEGCAEAVSRVLNKLGGVEFNIDLPNKKVCIDSEHSSDTLLATLNKTGKAVSYLGPK.

Positions 1 to 63 constitute an HMA domain; that stretch reads MPKHEFSVDM…TLNKTGKAVS (63 aa). Cu cation-binding residues include C12 and C15. S47 is subject to Phosphoserine. K60 is subject to N6-acetyllysine.

This sequence belongs to the ATX1 family. Homodimer. Interacts with ATP7B. Interacts with ATP7A. Interacts (via dimer form) with SLC31A1 (via C-terminal domain); this interaction improves ATOX1 stability and controls intracellular Cu(I) levels.

Binds and deliver cytosolic copper to the copper ATPase proteins. May be important in cellular antioxidant defense. This chain is Copper transport protein ATOX1, found in Mus musculus (Mouse).